A 358-amino-acid chain; its full sequence is Transcription factor PCF6 (358 aa).

Positions 1–29 are disordered; it reads MEAAVGDGEGGGGGGGRGKRGRGGGGGEM. The segment covering 7–16 has biased composition (gly residues); that stretch reads DGEGGGGGGG. In terms of domain architecture, TCP spans 52–110; it reads GKDRHSKVYTAKGIRDRRVRLSVATAIQFYDLQDRLGFDQPSKAIEWLINAASPAIDTL. 2 disordered regions span residues 127–163 and 282–308; these read ADAA…DKEV and ANRG…QQLQ. 2 stretches are compositionally biased toward polar residues: residues 143-156 and 285-296; these read LSNK…SETS and GTLQSNSPSNMS.

As to quaternary structure, forms homodimers and heterodimers.

It localises to the nucleus. Its function is as follows. Transcription activator. Binds the promoter core sequence 5'-GGNCC-3'. The sequence is that of Transcription factor PCF6 (PCF6) from Oryza sativa subsp. indica (Rice).